The primary structure comprises 163 residues: Cytosolic iron-sulfur assembly component 2B (163 aa).

The protein belongs to the MIP18 family. As to quaternary structure, component of the CIA complex. Component of the MMXD complex, which includes CIAO1, ERCC2, CIAO2B, MMS19 and SLC25A5. Interacts with CIAO1, ERCC2 and MMS19; the interactions are direct. Interacts with KIF4A; the interaction facilitates the transfer of Fe-S clusters to KIF4A to ensure proper localization of KIF4A to the mitotic machinery. Interacts with CCDC117; the interaction is direct.

It is found in the nucleus. The protein resides in the cytoplasm. Its subcellular location is the cytoskeleton. The protein localises to the spindle. Functionally, component of the cytosolic iron-sulfur protein assembly (CIA) complex, a multiprotein complex that mediates the incorporation of iron-sulfur cluster into extramitochondrial Fe/S proteins. As a CIA complex component and in collaboration with CIAO1 and MMS19, binds to and facilitates the assembly of most cytosolic-nuclear Fe/S proteins. As part of the mitotic spindle-associated MMXD complex it plays a role in chromosome segregation, probably by facilitating iron-sulfur cluster assembly into ERCC2/XPD. Together with MMS19, facilitates the transfer of Fe-S clusters to the motor protein KIF4A, which ensures proper localization of KIF4A to mitotic machinery components to promote the progression of mitosis. The chain is Cytosolic iron-sulfur assembly component 2B from Mus musculus (Mouse).